The primary structure comprises 84 residues: Exodeoxyribonuclease 7 small subunit (84 aa).

It belongs to the XseB family. In terms of assembly, heterooligomer composed of large and small subunits.

The protein resides in the cytoplasm. The enzyme catalyses Exonucleolytic cleavage in either 5'- to 3'- or 3'- to 5'-direction to yield nucleoside 5'-phosphates.. Bidirectionally degrades single-stranded DNA into large acid-insoluble oligonucleotides, which are then degraded further into small acid-soluble oligonucleotides. In Haemophilus influenzae (strain 86-028NP), this protein is Exodeoxyribonuclease 7 small subunit.